A 165-amino-acid chain; its full sequence is Urease accessory protein UreE (165 aa).

The protein belongs to the UreE family.

The protein resides in the cytoplasm. Involved in urease metallocenter assembly. Binds nickel. Probably functions as a nickel donor during metallocenter assembly. This Micrococcus luteus (strain ATCC 4698 / DSM 20030 / JCM 1464 / CCM 169 / CCUG 5858 / IAM 1056 / NBRC 3333 / NCIMB 9278 / NCTC 2665 / VKM Ac-2230) (Micrococcus lysodeikticus) protein is Urease accessory protein UreE.